The primary structure comprises 948 residues: MKKNNTILYYGCAAQARYASSNHGLLYSPSQAHLFNFSLARTYLNFSNGFRAFSTSLHLSYNQPLITYDLQDHTIDIEEMKKENLEKSFKSNTYIFKCLLNTINNKPINEKTQMEIEELLNKFTYASFSKKLEANQKNPEIIDYSLLNPKLAAILTDVRPTLISIINNLQKDYPDYFMAKLFKKSDKNEYYIGLVIKGLTPEEIINSIFFHVLKVLSFHTKKLDKSNSTSDIAFGMGKVLVENFYYNEFIKIKNKLSKEEQKCYYLSNWKKDNKDIVEKLEDNIFQFLLGQKISNLTKDTDLLDMETVTMAYREKSIVWKPTKKILKVLPEDGTLFVLPKKIPMIVKPKPYTTRVNGGYLSNDLYINENIVKEKWNLRDNTQILHFNQIFDLVNNLSSIGYKINTDVLDFIELYGSDYFKNELIDPRYSHPLLKKSKLTKKEKMELDSFLAKKELQENILGLAEIFRNIPEFFIPVNADFRGRVYCTPEYLNYQSTDLAKSLLLFSKPGRMYKKDYIALSYLKIYGGSSFGLDKLSANDRIKWVDKNLNNIKNYRNGKLIKEAKNKFLFLAFCIEYNRYLNCLDNHDVSWFDTYLPIQMDATCNGFQHLSLLSLDSNLSKELNLSESTWDDVPKDFYTFLVVCFIDYLKTELLENKNLTPKESESYNRLINMKIIREIIKKGIMTIPYNVSNFSLINYIREGFELEDNSLEWYIYKNEPSIRLKSLDFTVLGKGLRKVLHEKFHKLDLLLKYLDQVARVCTLLEIPIIWTLPTGLVVRQSYMIRDEVRIKPFNHSNKKFSMKVLNKTQFNNSKQITAFMPNLVHSLDAASLTLLLDFYFKESIDVKNIYTIHDCFAVPANKMECLISLLKLTYIKLYSDDKYLLKLDDDIRKNIRSTQNKGCFNEETLEITGDSFPDPIKFPDVQKVIGIVPSDFDFNVLKKSSYILN.

Residues D600, K680, and D853 contribute to the active site.

The protein belongs to the phage and mitochondrial RNA polymerase family.

It localises to the mitochondrion. It catalyses the reaction RNA(n) + a ribonucleoside 5'-triphosphate = RNA(n+1) + diphosphate. Functionally, DNA-dependent RNA polymerase catalyzes the transcription of DNA into RNA using the four ribonucleoside triphosphates as substrates. In Podospora anserina (Pleurage anserina), this protein is Probable DNA-directed RNA polymerase.